Reading from the N-terminus, the 513-residue chain is MSTTTSLIIAILAGILGIVIGFFFRKSLAEKKIRSAEDYAVKIIEDANKDAETKKKELLVEAKDEIFKMKSDLDRENKSRLKEISRQEDRLNSKEENLERKNASLEKKHKKLDSELKKADDMQLKIQSLIDEKELELEKVAGLTSDEAKNIVLERVKTETIREQAAIIKEIESKTKEESEKFAREIISTSIQRYAADQVAESTVSVVNLPNDDMKGRIIGREGRNIRAFETLTGVDLIIDDTPEAVVLSAFDPVRREIARIALEKLIVDGRIHPTRIEEMVEKARKDVDNTIREKGEEACDETNVHGLHPELIKILGKLHYRTSYGQNVLKHSIEVSNIAGMLASELGVNVKLAKRGGLLHDLGKAIDHEIEGPHVELGVNAAKRFKEPKDVINCIEAHHGDVEPTCIESILVQSADAISAARPGARRESMENYIQRLENLEQIANSFDGIESSYAIQAGREIRIMVKPDVIDESSMVILAKDVAHKIESELEYPGQIKVNVIRENRVSDYAK.

The chain crosses the membrane as a helical span at residues 4-24 (TTSLIIAILAGILGIVIGFFF). Residues 78-106 (KSRLKEISRQEDRLNSKEENLERKNASLE) are disordered. Residues 203–288 (TVSVVNLPND…EMVEKARKDV (86 aa)) enclose the KH domain. In terms of domain architecture, HD spans 329 to 422 (VLKHSIEVSN…VQSADAISAA (94 aa)).

This sequence belongs to the RNase Y family.

Its subcellular location is the cell membrane. Endoribonuclease that initiates mRNA decay. The chain is Ribonuclease Y from Finegoldia magna (strain ATCC 29328 / DSM 20472 / WAL 2508) (Peptostreptococcus magnus).